We begin with the raw amino-acid sequence, 78 residues long: MTEAQIKEKVYDIIVSKMGVNKDQIKPESKFSDDLGADSLDTVELIMELENEFDVQIPDEDAEKISTVQQAIDYIVKK.

One can recognise a Carrier domain in the interval 4–78; the sequence is AQIKEKVYDI…QQAIDYIVKK (75 aa). S39 bears the O-(pantetheine 4'-phosphoryl)serine mark.

The protein belongs to the acyl carrier protein (ACP) family. Post-translationally, 4'-phosphopantetheine is transferred from CoA to a specific serine of apo-ACP by AcpS. This modification is essential for activity because fatty acids are bound in thioester linkage to the sulfhydryl of the prosthetic group.

The protein localises to the cytoplasm. It participates in lipid metabolism; fatty acid biosynthesis. Functionally, carrier of the growing fatty acid chain in fatty acid biosynthesis. The sequence is that of Acyl carrier protein from Chlorobium phaeobacteroides (strain DSM 266 / SMG 266 / 2430).